Reading from the N-terminus, the 241-residue chain is Ribonuclease PH (241 aa).

Phosphate contacts are provided by residues arginine 89 and 127–129 (GTR).

The protein belongs to the RNase PH family. As to quaternary structure, homohexameric ring arranged as a trimer of dimers.

It catalyses the reaction tRNA(n+1) + phosphate = tRNA(n) + a ribonucleoside 5'-diphosphate. Functionally, phosphorolytic 3'-5' exoribonuclease that plays an important role in tRNA 3'-end maturation. Removes nucleotide residues following the 3'-CCA terminus of tRNAs; can also add nucleotides to the ends of RNA molecules by using nucleoside diphosphates as substrates, but this may not be physiologically important. Probably plays a role in initiation of 16S rRNA degradation (leading to ribosome degradation) during starvation. The chain is Ribonuclease PH from Xanthomonas axonopodis pv. citri (strain 306).